The following is a 263-amino-acid chain: Small ribosomal subunit protein uS2 (263 aa).

It belongs to the universal ribosomal protein uS2 family.

In Hyphomonas neptunium (strain ATCC 15444), this protein is Small ribosomal subunit protein uS2.